The primary structure comprises 179 residues: MSRIGKMPIAIGNEAKIEVKGGIITVTGPKGVLDQPMVEEVRIVEEDGKVLVQRINDSKRARAMHGLYRMLVSNMIQGVTTGFTRKLEIAGVGFRAEMKSDLLALTLGYSHMIYFKAPEGIKMETPDQVTVLISGIDKALVGQVAAKIRSFRKPEPYRGKGIKYEGEIIRRKEGKAAGK.

This sequence belongs to the universal ribosomal protein uL6 family. As to quaternary structure, part of the 50S ribosomal subunit.

In terms of biological role, this protein binds to the 23S rRNA, and is important in its secondary structure. It is located near the subunit interface in the base of the L7/L12 stalk, and near the tRNA binding site of the peptidyltransferase center. The polypeptide is Large ribosomal subunit protein uL6 (Chlorobium luteolum (strain DSM 273 / BCRC 81028 / 2530) (Pelodictyon luteolum)).